Here is a 495-residue protein sequence, read N- to C-terminus: Glutamate--tRNA ligase (495 aa).

Positions 14–24 (PSPTGYLHIGS) match the 'HIGH' region motif. The short motif at 255-259 (KLSKR) is the 'KMSKS' region element. Lys258 contributes to the ATP binding site.

Belongs to the class-I aminoacyl-tRNA synthetase family. Glutamate--tRNA ligase type 1 subfamily. In terms of assembly, monomer.

The protein resides in the cytoplasm. It carries out the reaction tRNA(Glu) + L-glutamate + ATP = L-glutamyl-tRNA(Glu) + AMP + diphosphate. In terms of biological role, catalyzes the attachment of glutamate to tRNA(Glu) in a two-step reaction: glutamate is first activated by ATP to form Glu-AMP and then transferred to the acceptor end of tRNA(Glu). The sequence is that of Glutamate--tRNA ligase from Herpetosiphon aurantiacus (strain ATCC 23779 / DSM 785 / 114-95).